The sequence spans 419 residues: L-rhamnose isomerase (419 aa).

Histidine 262, aspartate 294, and aspartate 296 together coordinate Mn(2+).

Belongs to the rhamnose isomerase family. Homotetramer. The cofactor is Mn(2+).

The protein localises to the cytoplasm. It carries out the reaction L-rhamnopyranose = L-rhamnulose. It participates in carbohydrate degradation; L-rhamnose degradation; glycerone phosphate from L-rhamnose: step 1/3. Its function is as follows. Catalyzes the interconversion of L-rhamnose and L-rhamnulose. This is L-rhamnose isomerase from Salmonella newport (strain SL254).